The sequence spans 873 residues: Sister chromatid cohesion protein PDS5 homolog C (873 aa).

HEAT repeat units lie at residues 53–92 (NALT…ITAP), 99–136 (DQMK…VAKV), 149–187 (ALLI…ESED), and 189–227 (PSEM…KLKT). Over residues 266 to 301 (NEKEDSQGHIKRETEVEKAAEISTPERTDAPKDESG) the composition is skewed to basic and acidic residues. Disordered stretches follow at residues 266–611 (NEKE…LVGS) and 658–873 (SPLD…KRKR). Phosphothreonine is present on Thr-289. The segment covering 303 to 319 (SGVSNGVAQQNDSSVDT) has biased composition (polar residues). The segment covering 320 to 334 (DSMKKQDDTGAKDEP) has biased composition (basic and acidic residues). The span at 336-348 (QLDNPRNTDLNNT) shows a compositional bias: polar residues. Basic and acidic residues-rich tracts occupy residues 349-365 (TEEK…KENE) and 373-394 (DLSK…DSKD). Composition is skewed to polar residues over residues 400–411 (PVDSSVTAATSS) and 418–438 (SVQI…SSPS). Positions 456 to 466 (KKKESSTEEVK) are enriched in basic and acidic residues. The segment covering 494-510 (KVASSSKTKPTVPPSKK) has biased composition (low complexity). Composition is skewed to basic and acidic residues over residues 511-526 (STSE…KKVV) and 535-555 (TKPK…EESL). A compositionally biased stretch (acidic residues) spans 661–681 (DESELSQDEEAADQTGQEEDA). Positions 701–725 (SSAKKGSGAGSSKAKATPASKSSKT) are enriched in low complexity. Residues 726–746 (SQDDKTASKSKDSKEASREEE) are compositionally biased toward basic and acidic residues. Residues 747 to 757 (ASSEEESEEEE) are compositionally biased toward acidic residues. Low complexity-rich tracts occupy residues 795–814 (KATT…PAKS) and 822–831 (KSGSASTPAS). The span at 844-853 (ETPKEPEPAT) shows a compositional bias: basic and acidic residues. Residues 854-866 (KAKSGKSQGSQSK) are compositionally biased toward low complexity.

The protein belongs to the PDS5 family. In terms of assembly, interacts with the cohesin complex.

Its subcellular location is the nucleus. In terms of biological role, cohesin cofactor dispensable during the meiotic division but playing an important role in DNA repair by homologous recombination (HR) probably by helping SMC5/SMC6 complex. Regulator of sister chromatid cohesion in mitosis which may stabilize cohesin complex association with chromatin. May couple sister chromatid cohesion during mitosis to DNA replication. Cohesion ensures that chromosome partitioning is accurate in both meiotic and mitotic cells and plays an important role in DNA repair. The chain is Sister chromatid cohesion protein PDS5 homolog C from Arabidopsis thaliana (Mouse-ear cress).